A 609-amino-acid chain; its full sequence is Isopenicillin N epimerase component 1 (609 aa).

185 to 196 provides a ligand contact to AMP; that stretch reads MLSGSGTTGLPK. The disordered stretch occupies residues 545–570; sequence STDNHKHNKVPLRDEGVDPRSMGSKV.

It belongs to the ATP-dependent AMP-binding enzyme family.

The catalysed reaction is isopenicillin N = penicillin N. The protein operates within antibiotic biosynthesis; cephalosporin C biosynthesis. In terms of biological role, together with cefD2, catalyzes the reversible isomerization between isopenicillin N and penicillin N. This two-component IPN epimerase system may function by two sequential steps, an activation of isopenicillin N by the acyl-CoA synthase component cefD1, followed by epimerization by the acyl-CoA racemase component cefD2. The polypeptide is Isopenicillin N epimerase component 1 (cefD1) (Hapsidospora chrysogena (Acremonium chrysogenum)).